The chain runs to 238 residues: uncharacterized protein (238 aa).

The next 4 membrane-spanning stretches (helical) occupy residues 16–36 (HLII…IGLE), 44–64 (VGVK…IVSI), 81–101 (PMRL…GVIL), and 123–143 (IGIA…VMIL).

The protein belongs to the MgtC/SapB family.

Its subcellular location is the cell inner membrane. This is an uncharacterized protein from Haemophilus influenzae (strain ATCC 51907 / DSM 11121 / KW20 / Rd).